An 88-amino-acid chain; its full sequence is Phosphocarrier protein HPr (88 aa).

The 88-residue stretch at 1–88 (MEKRDFHVVA…ETMKKEGLSE (88 aa)) folds into the HPr domain. His-15 functions as the Pros-phosphohistidine intermediate in the catalytic mechanism. Residue Ser-46 is modified to Phosphoserine; by HPrK/P.

Belongs to the HPr family.

The protein localises to the cytoplasm. Its activity is regulated as follows. Phosphorylation on Ser-46 inhibits the phosphoryl transfer from enzyme I to HPr. Its function is as follows. General (non sugar-specific) component of the phosphoenolpyruvate-dependent sugar phosphotransferase system (sugar PTS). This major carbohydrate active-transport system catalyzes the phosphorylation of incoming sugar substrates concomitantly with their translocation across the cell membrane. The phosphoryl group from phosphoenolpyruvate (PEP) is transferred to the phosphoryl carrier protein HPr by enzyme I. Phospho-HPr then transfers it to the PTS EIIA domain. In terms of biological role, P-Ser-HPr interacts with the catabolite control protein A (CcpA), forming a complex that binds to DNA at the catabolite response elements cre, operator sites preceding a large number of catabolite-regulated genes. Thus, P-Ser-HPr is a corepressor in carbon catabolite repression (CCR), a mechanism that allows bacteria to coordinate and optimize the utilization of available carbon sources. P-Ser-HPr also plays a role in inducer exclusion, in which it probably interacts with several non-PTS permeases and inhibits their transport activity. The chain is Phosphocarrier protein HPr (ptsH) from Latilactobacillus sakei (Lactobacillus sakei).